A 444-amino-acid chain; its full sequence is C4-dicarboxylate transport protein 1 (444 aa).

9 consecutive transmembrane segments (helical) span residues 9–29, 42–62, 78–98, 152–172, 190–210, 221–241, 307–327, 354–374, and 380–400; these read SIFL…VGIP, FIKL…VNGI, SVIY…VVAY, ILQV…VGEQ, IMGM…AFTT, LGAL…AVLG, FSIY…TPLA, VILA…LVLV, and FMGI…TVTI.

It belongs to the dicarboxylate/amino acid:cation symporter (DAACS) (TC 2.A.23) family.

It localises to the cell inner membrane. In terms of biological role, responsible for the transport of dicarboxylates such as succinate, fumarate, and malate from the periplasm across the membrane. The chain is C4-dicarboxylate transport protein 1 from Pseudomonas paraeruginosa (strain DSM 24068 / PA7) (Pseudomonas aeruginosa (strain PA7)).